A 70-amino-acid polypeptide reads, in one-letter code: Small ribosomal subunit protein bS21C (70 aa).

This sequence belongs to the bacterial ribosomal protein bS21 family.

The protein is Small ribosomal subunit protein bS21C of Burkholderia pseudomallei (strain 1710b).